A 488-amino-acid chain; its full sequence is 3-octaprenyl-4-hydroxybenzoate carboxy-lyase (488 aa).

Asn-172 contacts Mn(2+). Prenylated FMN contacts are provided by residues 175–177 (IYR), 189–191 (RWL), and 194–195 (RG). Position 238 (Glu-238) interacts with Mn(2+). The active-site Proton donor is the Asp-287.

It belongs to the UbiD family. In terms of assembly, homohexamer. Requires prenylated FMN as cofactor. The cofactor is Mn(2+).

Its subcellular location is the cell membrane. It carries out the reaction a 4-hydroxy-3-(all-trans-polyprenyl)benzoate + H(+) = a 2-(all-trans-polyprenyl)phenol + CO2. It participates in cofactor biosynthesis; ubiquinone biosynthesis. Functionally, catalyzes the decarboxylation of 3-octaprenyl-4-hydroxy benzoate to 2-octaprenylphenol, an intermediate step in ubiquinone biosynthesis. This is 3-octaprenyl-4-hydroxybenzoate carboxy-lyase from Legionella pneumophila (strain Corby).